Reading from the N-terminus, the 352-residue chain is DNA polymerase IV (352 aa).

Positions 6–187 (IIHIDCDCFY…LPVSKLHGVG (182 aa)) constitute a UmuC domain. Residues Asp10 and Asp105 each coordinate Mg(2+). Glu106 is a catalytic residue.

Belongs to the DNA polymerase type-Y family. In terms of assembly, monomer. It depends on Mg(2+) as a cofactor.

The protein resides in the cytoplasm. It carries out the reaction DNA(n) + a 2'-deoxyribonucleoside 5'-triphosphate = DNA(n+1) + diphosphate. Functionally, poorly processive, error-prone DNA polymerase involved in untargeted mutagenesis. Copies undamaged DNA at stalled replication forks, which arise in vivo from mismatched or misaligned primer ends. These misaligned primers can be extended by PolIV. Exhibits no 3'-5' exonuclease (proofreading) activity. May be involved in translesional synthesis, in conjunction with the beta clamp from PolIII. In Ectopseudomonas mendocina (strain ymp) (Pseudomonas mendocina), this protein is DNA polymerase IV.